Here is a 271-residue protein sequence, read N- to C-terminus: Structure-specific endonuclease subunit slx1 (271 aa).

Residues 5 to 87 (NFYCCYLLKS…QNLGISRYTK (83 aa)) enclose the GIY-YIG domain. The SLX1-type zinc-finger motif lies at 180–231 (CNLCYECIESDELRANCPFTDCNSINHLTCLASSFLTEECQVLPIEGMCTKC).

Belongs to the SLX1 family. As to quaternary structure, forms a heterodimer with slx4. Requires Mg(2+) as cofactor. It depends on Mn(2+) as a cofactor.

It is found in the nucleus. Its subcellular location is the nucleolus. In terms of biological role, catalytic subunit of the slx1-slx4 structure-specific endonuclease that resolves DNA secondary structures generated during DNA repair and recombination. Has endonuclease activity towards branched DNA substrates, introducing single-strand cuts in duplex DNA close to junctions with ss-DNA. Has a preference for stem-loop (SL) and splayed arm Y structures. Introduces a single-strand cut in duplex DNA on the 3' side of a double-strand/single-strand junction with respect to the single-strand moving 3' to 5' away from the junction. Plays a critical role in maintaining the integrity of the ribosomal DNA (rDNA) loci, where it has a role in re-starting stalled replication forks. The complex initiates homologous recombination (HR) events, used to maintain rDNA copy number, in the rDNA repeats that are processed by a mechanism that requires rad22, but not rhp51. It is also required for suppression of methyl methanesulfonate (MMS) and UV-C irradiation hypersensitivity of the structural maintenance of chromosome (SMC) protein mutant, smc6-74, by overexpression of brc1. Has Holliday junction resolvase activity in vitro. This chain is Structure-specific endonuclease subunit slx1, found in Schizosaccharomyces pombe (strain 972 / ATCC 24843) (Fission yeast).